We begin with the raw amino-acid sequence, 379 residues long: Succinyl-diaminopimelate desuccinylase (379 aa).

Zn(2+) is bound at residue His70. Residue Asp72 is part of the active site. Asp103 contributes to the Zn(2+) binding site. Glu137 acts as the Proton acceptor in catalysis. Zn(2+) is bound by residues Glu138, Glu166, and His352.

It belongs to the peptidase M20A family. DapE subfamily. As to quaternary structure, homodimer. Zn(2+) is required as a cofactor. Co(2+) serves as cofactor.

It carries out the reaction N-succinyl-(2S,6S)-2,6-diaminopimelate + H2O = (2S,6S)-2,6-diaminopimelate + succinate. It functions in the pathway amino-acid biosynthesis; L-lysine biosynthesis via DAP pathway; LL-2,6-diaminopimelate from (S)-tetrahydrodipicolinate (succinylase route): step 3/3. In terms of biological role, catalyzes the hydrolysis of N-succinyl-L,L-diaminopimelic acid (SDAP), forming succinate and LL-2,6-diaminopimelate (DAP), an intermediate involved in the bacterial biosynthesis of lysine and meso-diaminopimelic acid, an essential component of bacterial cell walls. The chain is Succinyl-diaminopimelate desuccinylase from Burkholderia cenocepacia (strain ATCC BAA-245 / DSM 16553 / LMG 16656 / NCTC 13227 / J2315 / CF5610) (Burkholderia cepacia (strain J2315)).